A 685-amino-acid chain; its full sequence is Potassium-transporting ATPase ATP-binding subunit (685 aa).

Transmembrane regions (helical) follow at residues 36 to 56 (MFVV…PSIF), 68 to 88 (LIVT…ESVA), 218 to 238 (IALN…LVAL), and 255 to 275 (IALL…AIGI). Asp306 functions as the 4-aspartylphosphate intermediate in the catalytic mechanism. Residues Asp343, Glu347, 375 to 382 (FTAQTRMS), and Lys394 each bind ATP. Residues Asp517 and Asp521 each contribute to the Mg(2+) site. The next 3 helical transmembrane spans lie at 587–607 (FAII…MNIM), 615–635 (AILS…PIAM), and 654–674 (IVFG…IDMI).

Belongs to the cation transport ATPase (P-type) (TC 3.A.3) family. Type IA subfamily. The system is composed of three essential subunits: KdpA, KdpB and KdpC.

It localises to the cell membrane. It catalyses the reaction K(+)(out) + ATP + H2O = K(+)(in) + ADP + phosphate + H(+). Part of the high-affinity ATP-driven potassium transport (or Kdp) system, which catalyzes the hydrolysis of ATP coupled with the electrogenic transport of potassium into the cytoplasm. This subunit is responsible for energy coupling to the transport system and for the release of the potassium ions to the cytoplasm. This is Potassium-transporting ATPase ATP-binding subunit from Clostridium acetobutylicum (strain ATCC 824 / DSM 792 / JCM 1419 / IAM 19013 / LMG 5710 / NBRC 13948 / NRRL B-527 / VKM B-1787 / 2291 / W).